Here is a 151-residue protein sequence, read N- to C-terminus: Endolysin (151 aa).

The N-acetylmuramoyl-L-alanine amidase domain occupies 10 to 132 (ESTDAIFVHC…HHEVAPKACP (123 aa)). The Zn(2+) site is built by histidine 18, histidine 123, and cysteine 131.

Belongs to the N-acetylmuramoyl-L-alanine amidase 2 family. As to quaternary structure, interacts with the viral RNA polymerase. Zn(2+) serves as cofactor.

It is found in the host cytoplasm. The catalysed reaction is Hydrolyzes the link between N-acetylmuramoyl residues and L-amino acid residues in certain cell-wall glycopeptides.. Its activity is regulated as follows. Binding to the viral RNA polymerase inhibits amidase activity. Plays an important role in the switch between viral transcription and genome replication. Once produced in sufficient amount, interacts with and inhibits the viral RNA polymerase that becomes unable to produce additional late transcripts. This lysozyme-polymerase complex in turn plays an active role in viral genome replication and packaging. Its function is as follows. Endolysin with amidase activity that degrades host peptidoglycans and participates with the holin and spanin proteins in the sequential events which lead to the programmed host cell lysis releasing the mature viral particles. Once the holin has permeabilized the host cell membrane, the endolysin can reach the periplasm and breaking down the peptidoglycan layer. This is Endolysin from Escherichia coli (Bacteriophage T7).